Reading from the N-terminus, the 696-residue chain is Glycine--tRNA ligase beta subunit (696 aa).

The protein belongs to the class-II aminoacyl-tRNA synthetase family. As to quaternary structure, tetramer of two alpha and two beta subunits.

It is found in the cytoplasm. It catalyses the reaction tRNA(Gly) + glycine + ATP = glycyl-tRNA(Gly) + AMP + diphosphate. The protein is Glycine--tRNA ligase beta subunit of Nitratidesulfovibrio vulgaris (strain ATCC 29579 / DSM 644 / CCUG 34227 / NCIMB 8303 / VKM B-1760 / Hildenborough) (Desulfovibrio vulgaris).